The chain runs to 89 residues: Small ribosomal subunit protein uS15 (89 aa).

This sequence belongs to the universal ribosomal protein uS15 family. As to quaternary structure, part of the 30S ribosomal subunit. Forms a bridge to the 50S subunit in the 70S ribosome, contacting the 23S rRNA.

Functionally, one of the primary rRNA binding proteins, it binds directly to 16S rRNA where it helps nucleate assembly of the platform of the 30S subunit by binding and bridging several RNA helices of the 16S rRNA. In terms of biological role, forms an intersubunit bridge (bridge B4) with the 23S rRNA of the 50S subunit in the ribosome. The polypeptide is Small ribosomal subunit protein uS15 (Trichormus variabilis (strain ATCC 29413 / PCC 7937) (Anabaena variabilis)).